Reading from the N-terminus, the 718-residue chain is Methionine--tRNA ligase (718 aa).

The 'HIGH' region signature appears at Pro27–His37. Residues Cys158, Cys161, Cys171, and Cys174 each coordinate Zn(2+). Residues Lys348–Ser352 carry the 'KMSKS' region motif. Residue Lys351 coordinates ATP. The 107-residue stretch at Asp612 to Lys718 folds into the tRNA-binding domain.

The protein belongs to the class-I aminoacyl-tRNA synthetase family. MetG type 1 subfamily. Homodimer. Zn(2+) serves as cofactor.

Its subcellular location is the cytoplasm. It carries out the reaction tRNA(Met) + L-methionine + ATP = L-methionyl-tRNA(Met) + AMP + diphosphate. Is required not only for elongation of protein synthesis but also for the initiation of all mRNA translation through initiator tRNA(fMet) aminoacylation. This Burkholderia cenocepacia (strain ATCC BAA-245 / DSM 16553 / LMG 16656 / NCTC 13227 / J2315 / CF5610) (Burkholderia cepacia (strain J2315)) protein is Methionine--tRNA ligase.